The primary structure comprises 194 residues: Glycerol-3-phosphate acyltransferase (194 aa).

Transmembrane regions (helical) follow at residues 2–22 (AFFC…GVWI), 52–72 (LGVA…YIAS), 80–100 (DLVI…FISF), 112–132 (VFLF…ILVA), 137–157 (YVSL…FFTH), and 161–181 (YLFA…KTNI).

Belongs to the PlsY family. As to quaternary structure, probably interacts with PlsX.

Its subcellular location is the cell inner membrane. It catalyses the reaction an acyl phosphate + sn-glycerol 3-phosphate = a 1-acyl-sn-glycero-3-phosphate + phosphate. It functions in the pathway lipid metabolism; phospholipid metabolism. Functionally, catalyzes the transfer of an acyl group from acyl-phosphate (acyl-PO(4)) to glycerol-3-phosphate (G3P) to form lysophosphatidic acid (LPA). This enzyme utilizes acyl-phosphate as fatty acyl donor, but not acyl-CoA or acyl-ACP. This chain is Glycerol-3-phosphate acyltransferase, found in Fusobacterium nucleatum subsp. nucleatum (strain ATCC 25586 / DSM 15643 / BCRC 10681 / CIP 101130 / JCM 8532 / KCTC 2640 / LMG 13131 / VPI 4355).